The primary structure comprises 370 residues: MRTTSVGVFKIVTKGPGDVSGLMAMIGSGAIDPKSILAVLGKTEGNGGVNDFTREYAVAALCTALAPQLGLSPEEVEQRIAFVMSGGTEGVLSPHITVFTRREVERRPAGLSGKRLSIGMAHTRDFLPEELGRAAQIAETAAAVKAAMADAGIADPADVHFVQIKCPLLTSDRVEAASARGNKTATTSAYGSMAYSRGASALGVAVALGETGSDISDGDVLRRYDLFSKVASTSAGIELMHNVVIVLGNSAASASEFEIGHAVMNDAIDAAAVTSALKCVGLGVAPQAEAGRELVNIFAKAEASPDGSVRGFRHTMLEDTDISSTRHARAAVGGLIAGLAGTGAVYVSGGAEHQGPAGGGPVAVIARLSD.

The segment at 1–106 (MRTTSVGVFK…TVFTRREVER (106 aa)) is RU A. Substrate is bound by residues Arg-54 and 85 to 86 (SG). Residues 115–251 (RLSIGMAHTR…NVVIVLGNSA (137 aa)) form an RU B region. Lys-165 is an active-site residue. Residues Arg-197 and 234 to 235 (SA) each bind substrate. Ser-234 functions as the Nucleophile in the catalytic mechanism. Residues 257–370 (FEIGHAVMND…PVAVIARLSD (114 aa)) form an RU C region. Glu-302 contributes to the Mg(2+) binding site. Substrate contacts are provided by residues Arg-329 and 348–349 (SG). Mg(2+) contacts are provided by Ala-351, Gln-354, Gly-355, Pro-356, and Gly-359.

Belongs to the cyclic amide hydrolase (CyAH) family. As to quaternary structure, homotetramer.

The catalysed reaction is cyanurate + H2O = 1-carboxybiuret + H(+). It functions in the pathway xenobiotic degradation; atrazine degradation; biuret from cyanurate: step 1/1. Inhibited by barbituric acid. Responsible for the hydrolysis of cyanuric acid, an intermediate formed during catabolism of s-triazine based compounds in herbicides such as atrazine and polymers such as melamine. Catalyzes the hydrolytic opening of the s-triazine ring of cyanuric acid (2,4,6-trihydroxy-s-triazine) to yield carbon dioxide and carboxybiuret, which spontaneously decarboxylates to biuret. The polypeptide is Cyanuric acid amidohydrolase (Bradyrhizobium diazoefficiens (strain JCM 10833 / BCRC 13528 / IAM 13628 / NBRC 14792 / USDA 110)).